The following is a 421-amino-acid chain: Gamma-glutamyl phosphate reductase (421 aa).

Belongs to the gamma-glutamyl phosphate reductase family.

Its subcellular location is the cytoplasm. The enzyme catalyses L-glutamate 5-semialdehyde + phosphate + NADP(+) = L-glutamyl 5-phosphate + NADPH + H(+). It participates in amino-acid biosynthesis; L-proline biosynthesis; L-glutamate 5-semialdehyde from L-glutamate: step 2/2. In terms of biological role, catalyzes the NADPH-dependent reduction of L-glutamate 5-phosphate into L-glutamate 5-semialdehyde and phosphate. The product spontaneously undergoes cyclization to form 1-pyrroline-5-carboxylate. The polypeptide is Gamma-glutamyl phosphate reductase (Leptospira biflexa serovar Patoc (strain Patoc 1 / ATCC 23582 / Paris)).